Here is a 501-residue protein sequence, read N- to C-terminus: Glycerol kinase (501 aa).

Thr12 contacts ADP. ATP-binding residues include Thr12, Thr13, and Ser14. Sn-glycerol 3-phosphate is bound at residue Thr12. Residue Arg16 coordinates ADP. Arg82, Glu83, Tyr134, and Asp244 together coordinate sn-glycerol 3-phosphate. 5 residues coordinate glycerol: Arg82, Glu83, Tyr134, Asp244, and Gln245. Thr266 and Gly310 together coordinate ADP. Residues Thr266, Gly310, Gln314, and Gly411 each coordinate ATP. 2 residues coordinate ADP: Gly411 and Asn415.

The protein belongs to the FGGY kinase family.

The catalysed reaction is glycerol + ATP = sn-glycerol 3-phosphate + ADP + H(+). The protein operates within polyol metabolism; glycerol degradation via glycerol kinase pathway; sn-glycerol 3-phosphate from glycerol: step 1/1. Inhibited by fructose 1,6-bisphosphate (FBP). Functionally, key enzyme in the regulation of glycerol uptake and metabolism. Catalyzes the phosphorylation of glycerol to yield sn-glycerol 3-phosphate. The protein is Glycerol kinase of Methylorubrum populi (strain ATCC BAA-705 / NCIMB 13946 / BJ001) (Methylobacterium populi).